A 357-amino-acid chain; its full sequence is MRSNLCHPLKNQLPISFFLSGTIRKPIFSCSRLSISAIITKEQTQEESESKSKKEVAFSSSSSFDFKAYMIGKANSVNKALEDAVLVREPLKIHESMRYSLLAGGKRVRPMLCIAACELFGGTESVAMPSACAVEMIHTMSLMHDDLPCMDNDDLRRGKPTNHKVFGEDVAVLAGDALLAFAFEHIATATKGVSSERIVRVVGELAKCIGSEGLVAGQVVDVCSEGIADVGLEHLEFIHIHKTAALLEGSVVLGAIVGGANDEQISKLRKFARCIGLLFQVVDDILDVTKSSQELGKTAGKDLVADKVTYPKLLGIDKSREFAEKLNREAQEQLAEFDPEKAAPLIALANYIAYRDN.

The transit peptide at M1–T40 directs the protein to the chloroplast. K106, R109, and H138 together coordinate isopentenyl diphosphate. 2 residues coordinate Mg(2+): D145 and D151. R156 is a dimethylallyl diphosphate binding site. R157 provides a ligand contact to isopentenyl diphosphate. Dimethylallyl diphosphate is bound by residues K242, T243, Q280, K297, and K307.

It belongs to the FPP/GGPP synthase family. Mg(2+) is required as a cofactor.

Its subcellular location is the plastid. It is found in the chloroplast. It carries out the reaction isopentenyl diphosphate + dimethylallyl diphosphate = (2E)-geranyl diphosphate + diphosphate. The enzyme catalyses isopentenyl diphosphate + (2E)-geranyl diphosphate = (2E,6E)-farnesyl diphosphate + diphosphate. The catalysed reaction is isopentenyl diphosphate + (2E,6E)-farnesyl diphosphate = (2E,6E,10E)-geranylgeranyl diphosphate + diphosphate. It participates in isoprenoid biosynthesis; farnesyl diphosphate biosynthesis; farnesyl diphosphate from geranyl diphosphate and isopentenyl diphosphate: step 1/1. It functions in the pathway isoprenoid biosynthesis; geranyl diphosphate biosynthesis; geranyl diphosphate from dimethylallyl diphosphate and isopentenyl diphosphate: step 1/1. Its pathway is isoprenoid biosynthesis; geranylgeranyl diphosphate biosynthesis; geranylgeranyl diphosphate from farnesyl diphosphate and isopentenyl diphosphate: step 1/1. In terms of biological role, catalyzes the trans-addition of the three molecules of IPP onto DMAPP to form geranylgeranyl pyrophosphate. The sequence is that of Geranylgeranyl pyrophosphate synthase, chloroplastic (GGPS1) from Catharanthus roseus (Madagascar periwinkle).